The chain runs to 134 residues: Large ribosomal subunit protein bL19 (134 aa).

Residues 110–134 (ARLHQEEGPSSAAPASTPPAAAPQA) form a disordered region. Positions 125 to 134 (STPPAAAPQA) are enriched in pro residues.

This sequence belongs to the bacterial ribosomal protein bL19 family.

In terms of biological role, this protein is located at the 30S-50S ribosomal subunit interface and may play a role in the structure and function of the aminoacyl-tRNA binding site. This is Large ribosomal subunit protein bL19 from Anaeromyxobacter sp. (strain Fw109-5).